The chain runs to 444 residues: Methylenetetrahydrofolate--tRNA-(uracil-5-)-methyltransferase TrmFO (444 aa).

Residue 9–14 coordinates FAD; the sequence is GAGMAG.

Belongs to the MnmG family. TrmFO subfamily. It depends on FAD as a cofactor.

It is found in the cytoplasm. The enzyme catalyses uridine(54) in tRNA + (6R)-5,10-methylene-5,6,7,8-tetrahydrofolate + NADH + H(+) = 5-methyluridine(54) in tRNA + (6S)-5,6,7,8-tetrahydrofolate + NAD(+). It carries out the reaction uridine(54) in tRNA + (6R)-5,10-methylene-5,6,7,8-tetrahydrofolate + NADPH + H(+) = 5-methyluridine(54) in tRNA + (6S)-5,6,7,8-tetrahydrofolate + NADP(+). In terms of biological role, catalyzes the folate-dependent formation of 5-methyl-uridine at position 54 (M-5-U54) in all tRNAs. This Cereibacter sphaeroides (strain ATCC 17023 / DSM 158 / JCM 6121 / CCUG 31486 / LMG 2827 / NBRC 12203 / NCIMB 8253 / ATH 2.4.1.) (Rhodobacter sphaeroides) protein is Methylenetetrahydrofolate--tRNA-(uracil-5-)-methyltransferase TrmFO.